The primary structure comprises 594 residues: uncharacterized protein (594 aa).

The presence of the two linear plasmids, termed pGKL1 and pGKL2, in strains of Kluyveromyces lactis confers the killer phenotype to the host cell, by promoting the secretion of a toxin able to inhibit the growth of sensitive strains. This is an uncharacterized protein from Kluyveromyces lactis (strain ATCC 8585 / CBS 2359 / DSM 70799 / NBRC 1267 / NRRL Y-1140 / WM37) (Yeast).